The sequence spans 401 residues: Elongation factor Tu 1 (401 aa).

In terms of domain architecture, tr-type G spans lysine 10–valine 209. The interval glycine 19–threonine 26 is G1. Glycine 19–threonine 26 contributes to the GTP binding site. Residue threonine 26 coordinates Mg(2+). Residues glycine 60–alanine 64 form a G2 region. Residues aspartate 81 to glycine 84 are G3. GTP is bound by residues aspartate 81–histidine 85 and asparagine 136–aspartate 139. Residues asparagine 136–aspartate 139 are G4. Positions serine 174–leucine 176 are G5.

Belongs to the TRAFAC class translation factor GTPase superfamily. Classic translation factor GTPase family. EF-Tu/EF-1A subfamily. As to quaternary structure, monomer.

The protein resides in the cytoplasm. It carries out the reaction GTP + H2O = GDP + phosphate + H(+). Its function is as follows. GTP hydrolase that promotes the GTP-dependent binding of aminoacyl-tRNA to the A-site of ribosomes during protein biosynthesis. The polypeptide is Elongation factor Tu 1 (Roseiflexus castenholzii (strain DSM 13941 / HLO8)).